A 314-amino-acid polypeptide reads, in one-letter code: Protein YIF1B (314 aa).

Residue methionine 1 is modified to N-acetylmethionine. Residues 1-12 (MHPAGLAAAAAG) show a composition bias toward low complexity. Residues 1 to 55 (MHPAGLAAAAAGTPRLRKWPSKRRIPVSQPGMADPHQLFDDTSSAQSRGYGAQRA) are disordered. Over 1–156 (MHPAGLAAAA…APRFDVNAPD (156 aa)) the chain is Cytoplasmic. Residue threonine 13 is modified to Phosphothreonine. Positions 15–25 (RLRKWPSKRRI) are enriched in basic residues. Phosphoserine is present on serine 65. The helical transmembrane segment at 157 to 177 (LYIPAMAFITYVLVAGLALGT) threads the bilayer. Residues 178–192 (QDRFSPDLLGLQASS) lie on the Extracellular side of the membrane. The helical transmembrane segment at 193–213 (ALAWLTLEVLAILLSLYLVTV) threads the bilayer. Residues 214–219 (NTDLTT) lie on the Cytoplasmic side of the membrane. The chain crosses the membrane as a helical span at residues 220 to 240 (IDLVAFLGYKYVGMIGGVLMG). Position 241 (leucine 241) is a topological domain, extracellular. The helical transmembrane segment at 242 to 262 (LFGKIGYYLVLGWCCVAIFVF) threads the bilayer. The Cytoplasmic segment spans residues 263-292 (MIRTLRLKILADAAAEGVPVRGARNQLRMY). The helical transmembrane segment at 293 to 313 (LTMAVAAAQPMLMYWLTFHLV) threads the bilayer. Position 314 (arginine 314) is a topological domain, extracellular.

It belongs to the YIF1 family. As to quaternary structure, interacts with HTR1A (via C-terminus). Interacts with ABCB9 (via TMD0); this interaction allows (but is not essential) the ER-to-Golgi trafficking and strongly depends on a salt bridge within TMD0.

It localises to the endoplasmic reticulum membrane. Its subcellular location is the golgi apparatus membrane. The protein resides in the endoplasmic reticulum-Golgi intermediate compartment membrane. Functions in endoplasmic reticulum to Golgi vesicle-mediated transport and regulates the proper organization of the endoplasmic reticulum and the Golgi. Plays a key role in targeting to neuronal dendrites receptors such as HTR1A. Plays also a role in primary cilium and sperm flagellum assembly probably through protein transport to these compartments. This chain is Protein YIF1B, found in Homo sapiens (Human).